Here is a 377-residue protein sequence, read N- to C-terminus: N5-carboxyaminoimidazole ribonucleotide synthase (377 aa).

Residues R93, K133, 138–144, 175–178, E183, H206, and 257–258 each bind ATP; these read GYDGKGQ, EEFV, and NE. The 191-residue stretch at 97–287 folds into the ATP-grasp domain; the sequence is KALLDHAGVR…QFENHLRAVC (191 aa).

This sequence belongs to the PurK/PurT family. In terms of assembly, homodimer.

It carries out the reaction 5-amino-1-(5-phospho-beta-D-ribosyl)imidazole + hydrogencarbonate + ATP = 5-carboxyamino-1-(5-phospho-D-ribosyl)imidazole + ADP + phosphate + 2 H(+). The protein operates within purine metabolism; IMP biosynthesis via de novo pathway; 5-amino-1-(5-phospho-D-ribosyl)imidazole-4-carboxylate from 5-amino-1-(5-phospho-D-ribosyl)imidazole (N5-CAIR route): step 1/2. Catalyzes the ATP-dependent conversion of 5-aminoimidazole ribonucleotide (AIR) and HCO(3)(-) to N5-carboxyaminoimidazole ribonucleotide (N5-CAIR). This chain is N5-carboxyaminoimidazole ribonucleotide synthase, found in Vibrio vulnificus (strain CMCP6).